The chain runs to 147 residues: Hemoglobin subunit beta (147 aa).

The residue at position 2 (Val-2) is an N-acetylvaline. In terms of domain architecture, Globin spans 3–147 (HLTGEEKAAV…VANALAHKYH (145 aa)). A Phosphothreonine modification is found at Thr-13. Ser-45 carries the phosphoserine modification. Position 60 is an N6-acetyllysine (Lys-60). Residue His-64 participates in heme b binding. Lys-83 is modified (N6-acetyllysine). Position 93 (His-93) interacts with heme b. Cys-94 carries the S-nitrosocysteine modification. Lys-145 is modified (N6-acetyllysine).

It belongs to the globin family. In terms of assembly, heterotetramer of two alpha chains and two beta chains. As to expression, red blood cells.

Its function is as follows. Involved in oxygen transport from the lung to the various peripheral tissues. The protein is Hemoglobin subunit beta (HBB) of Ailuropoda melanoleuca (Giant panda).